A 260-amino-acid polypeptide reads, in one-letter code: Type III pantothenate kinase (260 aa).

ATP is bound at residue 6–13 (DAGNTRIK). Substrate is bound by residues tyrosine 100 and 107-110 (GADR). Aspartate 109 functions as the Proton acceptor in the catalytic mechanism. An ATP-binding site is contributed by threonine 133. Threonine 186 is a substrate binding site.

The protein belongs to the type III pantothenate kinase family. Homodimer. Requires NH4(+) as cofactor. K(+) serves as cofactor.

The protein localises to the cytoplasm. It carries out the reaction (R)-pantothenate + ATP = (R)-4'-phosphopantothenate + ADP + H(+). It functions in the pathway cofactor biosynthesis; coenzyme A biosynthesis; CoA from (R)-pantothenate: step 1/5. Catalyzes the phosphorylation of pantothenate (Pan), the first step in CoA biosynthesis. This chain is Type III pantothenate kinase, found in Janthinobacterium sp. (strain Marseille) (Minibacterium massiliensis).